The primary structure comprises 161 residues: Nucleotide-binding protein Vapar_3769 (161 aa).

It belongs to the YajQ family.

Nucleotide-binding protein. The protein is Nucleotide-binding protein Vapar_3769 of Variovorax paradoxus (strain S110).